Consider the following 199-residue polypeptide: RNA-free ribonuclease P (199 aa).

The protein belongs to the HARP family.

The catalysed reaction is Endonucleolytic cleavage of RNA, removing 5'-extranucleotides from tRNA precursor.. Functionally, RNA-free RNase P that catalyzes the removal of the 5'-leader sequence from pre-tRNA to produce the mature 5'-terminus. This is RNA-free ribonuclease P from Pyrococcus furiosus (strain ATCC 43587 / DSM 3638 / JCM 8422 / Vc1).